Reading from the N-terminus, the 1117-residue chain is PR domain zinc finger protein 10 (1117 aa).

Residues 97 to 142 (QQTPLGGLEAKEEEDEDEDEDTEEDEEEDGEDADLDDWEPDPPRPF) are disordered. The segment covering 107 to 136 (KEEEDEDEDEDTEEDEEEDGEDADLDDWEP) has biased composition (acidic residues). The SET domain maps to 182–300 (LPLVLYIDRF…PKQELKVWYA (119 aa)). An N-terminal PR domain; essential for transcriptional activator activity region spans residues 201 to 305 (IPKRTQLGPV…KVWYAASYAE (105 aa)). Residues 329 to 351 (WPCYECNRRFISSEQLQQHLNSH) form a C2H2-type 1 zinc finger. A Glycyl lysine isopeptide (Lys-Gly) (interchain with G-Cter in SUMO2) cross-link involves residue K354. A compositionally biased stretch (basic residues) spans 361–381 (TRGRGRGRGKRRFGPGRRPGR). The tract at residues 361–386 (TRGRGRGRGKRRFGPGRRPGRPPKFI) is disordered. S398 carries the post-translational modification Phosphoserine. T402 bears the Phosphothreonine mark. The disordered stretch occupies residues 440–474 (QETQSSLEHEPETHTLHLQPQHEESVVPTQSTLTA). Positions 446 to 464 (LEHEPETHTLHLQPQHEES) are enriched in basic and acidic residues. C2H2-type zinc fingers lie at residues 500 to 522 (FKCLQCGKAFREKDKLDQHLRFH), 530 to 552 (LTCDLCNKGFISSASLESHMKLH), 558 to 580 (YSCIFCPESFDRLDLLKDHVAIH), 586 to 609 (FTCPTCKKRFPDFIQVKKHVRSFH), 614 to 636 (YQCTECDKAFCRPDKLRLHMLRH), 642 to 665 (FLCSTCGKQFKRKDKLREHMQRMH), 697 to 720 (FKCRLCMMGFRRRGMLVNHLSKRH), 742 to 765 (YFCQYCDKVYKSASKRKAHILKNH), and 804 to 827 (VCCPHCSKQYSSKTKMVQHIRKKH). A C-terminal glutamine-rich region; essential for transcriptional activator activity region spans residues 871–1097 (QAMTELSQTL…QTTSQQQTTQ (227 aa)). Disordered regions lie at residues 919 to 943 (VAPATSPHQSQQSTVDVGQLHDPQP), 958 to 1001 (GQPL…SSVQ), and 1066 to 1094 (QTSALSGGVQVQPPAHSDSLDPQTTSQQQ). The segment covering 924–934 (SPHQSQQSTVD) has biased composition (polar residues).

This sequence belongs to the class V-like SAM-binding methyltransferase superfamily.

It localises to the nucleus. In terms of biological role, transcriptional activator, essential for early embryonic development and survival of embryonic stem cells (ESCs). Supports cell growth and survival during early development by transcriptionally activating the expression of the translation initiation factor EIF3B, to sustain global translation. Activates the transcription of FLNC. The sequence is that of PR domain zinc finger protein 10 (PRDM10) from Pongo abelii (Sumatran orangutan).